The following is a 474-amino-acid chain: tRNA-2-methylthio-N(6)-dimethylallyladenosine synthase (474 aa).

The MTTase N-terminal domain occupies 21–138 (ERVYVETQGC…LPQMLARRRS (118 aa)). Positions 30, 67, 101, 175, 179, and 182 each coordinate [4Fe-4S] cluster. A Radical SAM core domain is found at 161-395 (RAEGPTAYVS…ARLHEQQSAA (235 aa)). Positions 397–460 (RALLGTRQSV…THSLRGRVVS (64 aa)) constitute a TRAM domain.

Belongs to the methylthiotransferase family. MiaB subfamily. As to quaternary structure, monomer. [4Fe-4S] cluster is required as a cofactor.

It localises to the cytoplasm. It catalyses the reaction N(6)-dimethylallyladenosine(37) in tRNA + (sulfur carrier)-SH + AH2 + 2 S-adenosyl-L-methionine = 2-methylsulfanyl-N(6)-dimethylallyladenosine(37) in tRNA + (sulfur carrier)-H + 5'-deoxyadenosine + L-methionine + A + S-adenosyl-L-homocysteine + 2 H(+). Its function is as follows. Catalyzes the methylthiolation of N6-(dimethylallyl)adenosine (i(6)A), leading to the formation of 2-methylthio-N6-(dimethylallyl)adenosine (ms(2)i(6)A) at position 37 in tRNAs that read codons beginning with uridine. This Halorhodospira halophila (strain DSM 244 / SL1) (Ectothiorhodospira halophila (strain DSM 244 / SL1)) protein is tRNA-2-methylthio-N(6)-dimethylallyladenosine synthase.